Here is a 510-residue protein sequence, read N- to C-terminus: MYRALRLLARSRPLVRAPAAALASAPGLGGAAVPSFWPPNAARMASQNSFRIEYDTFGELKVPNDKYYGAQTVRSTMNFKIGGVTERMPTPVIKAFGILKRAAAEVNQDYGLDPKIANAIMKAADEVAEGKLNDHFPLVVWQTGSGTQTNMNVNEVISNRAIEMLGGELGSKIPVHPNDHVNKSQSSNDTFPTAMHIAAAIEVHEVLLPGLQKLHDALDAKSKEFAQIIKIGRTHTQDAVPLTLGQEFSGYVQQVKYAMTRIKAAMPRIYELAAGGTAVGTGLNTRIGFAEKVAAKVAALTGLPFVTAPNKFEALAAHDALVELSGAMNTTACSLMKIANDIRFLGSGPRSGLGELILPENEPGSSIMPGKVNPTQCEAMTMVAAQVMGNHVAVTVGGSNGHFELNVFKPMMIKNVLHSARLLGDASVSFTENCVVGIQANTERINKLMNESLMLVTALNPHIGYDKAAKIAKTAHKNGSTLKETAIELGYLTAEQFDEWVKPKDMLGPK.

A mitochondrion-targeting transit peptide spans Met1–Met44. An N6-acetyllysine; alternate mark is found at Lys61, Lys66, and Lys80. Residues Lys61, Lys66, and Lys80 each carry the N6-succinyllysine; alternate modification. Thr85 and Thr90 each carry phosphothreonine. An N6-acetyllysine modification is found at Lys94. 2 positions are modified to N6-acetyllysine; alternate: Lys115 and Lys122. 2 positions are modified to N6-succinyllysine; alternate: Lys115 and Lys122. Substrate-binding positions include Ser145 to Thr147, His176 to Asp179, and Ser186 to Asn188. Position 213 is an N6-acetyllysine (Lys213). At Lys223 the chain carries N6-acetyllysine; alternate. Lys223 is modified (N6-succinyllysine; alternate). Thr234 contacts substrate. His235 serves as the catalytic Proton donor/acceptor. Thr236 carries the post-translational modification Phosphothreonine; by PRKDC. Lys256 is subject to N6-acetyllysine. Residue Lys292 is modified to N6-acetyllysine; alternate. Residue Lys292 is modified to N6-succinyllysine; alternate. The active site involves Ser365. Substrate is bound by residues Ser366 and Lys371 to Asn373. Residue Ser366 is modified to Phosphoserine. N6-succinyllysine is present on residues Lys467 and Lys473. Position 502 is an N6-acetyllysine (Lys502).

It belongs to the class-II fumarase/aspartase family. Fumarase subfamily. As to quaternary structure, homotetramer. Interacts with H2AZ1. Phosphorylation at Thr-236 by PRKDC in response to DNA damage promotes translocation to the nucleus and recruitment to DNA double-strand breaks (DSBs). Expressed in red blood cells; underexpressed in red blood cells (cytoplasm) of patients with hereditary non-spherocytic hemolytic anemia of unknown etiology.

Its subcellular location is the mitochondrion. The protein localises to the cytoplasm. It localises to the cytosol. It is found in the nucleus. The protein resides in the chromosome. The catalysed reaction is (S)-malate = fumarate + H2O. It functions in the pathway carbohydrate metabolism; tricarboxylic acid cycle; (S)-malate from fumarate: step 1/1. Catalyzes the reversible stereospecific interconversion of fumarate to L-malate. Experiments in other species have demonstrated that specific isoforms of this protein act in defined pathways and favor one direction over the other. In terms of biological role, catalyzes the hydration of fumarate to L-malate in the tricarboxylic acid (TCA) cycle to facilitate a transition step in the production of energy in the form of NADH. Its function is as follows. Catalyzes the dehydration of L-malate to fumarate. Fumarate metabolism in the cytosol plays a role during urea cycle and arginine metabolism; fumarate being a by-product of the urea cycle and amino-acid catabolism. Also plays a role in DNA repair by promoting non-homologous end-joining (NHEJ). In response to DNA damage and phosphorylation by PRKDC, translocates to the nucleus and accumulates at DNA double-strand breaks (DSBs): acts by catalyzing formation of fumarate, an inhibitor of KDM2B histone demethylase activity, resulting in enhanced dimethylation of histone H3 'Lys-36' (H3K36me2). The chain is Fumarate hydratase, mitochondrial from Homo sapiens (Human).